A 572-amino-acid polypeptide reads, in one-letter code: Mitochondrial distribution and morphology protein 34 (572 aa).

Positions 1 to 195 (MAFNFNWSPL…LPAIIHRLSL (195 aa)) constitute an SMP-LTD domain. Disordered regions lie at residues 210–239 (TQAEKAETANGEGPGQDPLASPPQDPVDAL), 330–423 (SASI…PLSP), and 455–482 (RDMGGPSSTSDPATQATQSEDTSATPRA). Residues 330–347 (SASIASMQTRSSTPSHTF) show a composition bias toward polar residues. The segment covering 358-370 (RHSKAHSRKRKKR) has biased composition (basic residues). The span at 371–381 (VVDLRRPKTTD) shows a compositional bias: basic and acidic residues. 2 stretches are compositionally biased toward polar residues: residues 387-400 (SDESAFTESTSAPS) and 460-480 (PSSTSDPATQATQSEDTSATP).

It belongs to the MDM34 family. As to quaternary structure, component of the ER-mitochondria encounter structure (ERMES) or MDM complex, composed of mmm1, mdm10, mdm12 and mdm34.

It is found in the mitochondrion outer membrane. In terms of biological role, component of the ERMES/MDM complex, which serves as a molecular tether to connect the endoplasmic reticulum (ER) and mitochondria. Components of this complex are involved in the control of mitochondrial shape and protein biogenesis, and function in nonvesicular lipid trafficking between the ER and mitochondria. Mdm34 is required for the interaction of the ER-resident membrane protein mmm1 and the outer mitochondrial membrane-resident beta-barrel protein mdm10. This is Mitochondrial distribution and morphology protein 34 from Aspergillus clavatus (strain ATCC 1007 / CBS 513.65 / DSM 816 / NCTC 3887 / NRRL 1 / QM 1276 / 107).